The following is a 686-amino-acid chain: Eukaryotic translation initiation factor 3 subunit B (686 aa).

The segment at 1 to 29 (MAKKHAGADANDSDYNEEPNFEDPPGFVD) is disordered. The span at 11-21 (NDSDYNEEPNF) shows a compositional bias: acidic residues. An RRM domain is found at 53–137 (SVVVVDNIPK…HTFAVNLFTD (85 aa)). WD repeat units lie at residues 203–242 (TRERFTDTFVKWSPLGTYVVTFHKPGVAIWGGSNFQKIQK), 289–327 (DGMSVLSMFRWSHDDKFVARMGENSIHIYETPSFYLLDL), 330–365 (IKIPGIRGFSWSPTDNVIAYWVEEQNQIPARVTLME), 438–480 (EIRE…KPSL), and 526–571 (PDHF…IKRT). Positions 590 to 642 (AEEKQKEIKKNLKKYYAVFEQKDRLRLTRASKELLEKRAQLRETFMEYRNKRI) form a coiled coil.

The protein belongs to the eIF-3 subunit B family. In terms of assembly, component of the eukaryotic translation initiation factor 3 (eIF-3) complex. The eIF-3 complex interacts with pix. Interacts with mxt.

It localises to the cytoplasm. Functionally, RNA-binding component of the eukaryotic translation initiation factor 3 (eIF-3) complex, which is involved in protein synthesis of a specialized repertoire of mRNAs and, together with other initiation factors, stimulates binding of mRNA and methionyl-tRNAi to the 40S ribosome. The eIF-3 complex specifically targets and initiates translation of a subset of mRNAs involved in cell proliferation. The sequence is that of Eukaryotic translation initiation factor 3 subunit B from Drosophila ananassae (Fruit fly).